The following is a 291-amino-acid chain: Lysosomal amino acid transporter 1 homolog (291 aa).

Over 1 to 37 (MVWKKLGSRNFSSCPSGSIQWIWDVLGECAQDGWDEA) the chain is Lumenal. A glycan (N-linked (GlcNAc...) asparagine) is linked at Asn10. The 67-residue stretch at 34 to 100 (WDEASVGLGL…LADQLPLQTY (67 aa)) folds into the PQ-loop 1 domain. The chain crosses the membrane as a helical span at residues 38–58 (SVGLGLISILCFAASTFPQFI). Residues 59-71 (KAYKTGNMDQALS) lie on the Cytoplasmic side of the membrane. The chain crosses the membrane as a helical span at residues 72–92 (LWFLLGWIGGDSCNLIGSFLA). The Lumenal segment spans residues 93–98 (DQLPLQ). The chain crosses the membrane as a helical span at residues 99–119 (TYTAVYYVLADLVMLTLYFYY). Over 120–134 (KFRTRPSLLSAPINS) the chain is Cytoplasmic. The helical transmembrane segment at 135–155 (VLLFLMGMACATPLLSAAGPV) threads the bilayer. The Lumenal segment spans residues 156 to 182 (AAPREAFRGRALLSVESGSKPFTRQEV). A helical membrane pass occupies residues 183–203 (IGFVIGSISSVLYLLSRLPQI). Residues 184–243 (GFVIGSISSVLYLLSRLPQIRTNFLRKSTQGISYSLFALVMLGNTLYGLSVLLKNPEEGQ) enclose the PQ-loop 2 domain. The Cytoplasmic portion of the chain corresponds to 204–214 (RTNFLRKSTQG). A helical transmembrane segment spans residues 215-235 (ISYSLFALVMLGNTLYGLSVL). Topologically, residues 236 to 254 (LKNPEEGQSEGSYLLHHLP) are lumenal. The helical transmembrane segment at 255–275 (WLVGSLGVLLLDTIISIQFLV) threads the bilayer. Topologically, residues 276–291 (YRRSTAASELEPLLPS) are cytoplasmic. The short motif at 288–289 (LL) is the Di-leucine motif element.

It belongs to the laat-1 family.

The protein resides in the lysosome membrane. Amino acid transporter that specifically mediates the pH-dependent export of the cationic amino acids arginine, histidine and lysine from lysosomes. The polypeptide is Lysosomal amino acid transporter 1 homolog (Homo sapiens (Human)).